We begin with the raw amino-acid sequence, 110 residues long: uncharacterized protein (110 aa).

This is an uncharacterized protein from Methanocaldococcus jannaschii (strain ATCC 43067 / DSM 2661 / JAL-1 / JCM 10045 / NBRC 100440) (Methanococcus jannaschii).